The primary structure comprises 515 residues: Interferon-induced, double-stranded RNA-activated protein kinase (515 aa).

At A2 the chain carries N-acetylalanine. Residues 8-76 (FYMDKLNKYR…AKLAVDILDN (69 aa)) form the DRBM 1 domain. Residue K68 forms a Glycyl lysine isopeptide (Lys-Gly) (interchain with G-Cter in ISG15) linkage. A Phosphothreonine modification is found at T84. The DRBM 2 domain occupies 95 to 162 (NYIGLVNSFA…AKEAYQKLLK (68 aa)). Residue Y96 is modified to Phosphotyrosine; by autocatalysis. A Glycyl lysine isopeptide (Lys-Gly) (interchain with G-Cter in ISG15) cross-link involves residue K154. Y157 carries the post-translational modification Phosphotyrosine; by autocatalysis. The tract at residues 204–224 (ENVFTNGLGENKRKSGVKVSP) is disordered. T233 is modified (phosphothreonine). Residues 241-515 (DFEDIEEIGL…ISEKKKRNTC (275 aa)) are interaction with TRAF5. Residues 242–504 (FEDIEEIGLG…EILKTLAEWR (263 aa)) form the Protein kinase domain. An ATP-binding site is contributed by 248 to 256 (IGLGGFGQV). Residue Y268 is modified to Phosphotyrosine; by autocatalysis. An ATP-binding site is contributed by K271. The active-site Proton acceptor is the D376. A phosphothreonine; by autocatalysis mark is found at T409 and T414. A Phosphoserine modification is found at S419.

It belongs to the protein kinase superfamily. Ser/Thr protein kinase family. GCN2 subfamily. In terms of assembly, homodimer. Interacts with DNAJC3 and STRBP. Forms a complex with FANCA, FANCC, FANCG and HSP70. Interacts with ADAR/ADAR1. The inactive form interacts with NCK1. Interacts (via the kinase catalytic domain) with STAT3 (via SH2 domain), TRAF2 (C-terminus), TRAF5 (C-terminus) and TRAF6 (C-terminus). Interacts with MAP2K6, TARBP2, NLRP1, NLRC4 and AIM2. Interacts (via DRBM 1 domain) with DUS2L (via DRBM domain). Interacts with DHX9 (via N-terminus) and this interaction is dependent upon activation of the kinase. The inactive form interacts with GSN. Interacts with IKBKB/IKKB, NPM1, NLRP3 and IRS1. Autophosphorylated on several Ser, Thr and Tyr residues. Autophosphorylation of Thr-414 is dependent on Thr-409 and is stimulated by dsRNA binding and dimerization. Autophosphorylation apparently leads to the activation of the kinase. Tyrosine autophosphorylation is essential for efficient dsRNA-binding, dimerization, and kinase activation. In terms of tissue distribution, expressed in heart, lung, brain, kidney, testes, thymus and bone marrow.

The protein resides in the cytoplasm. Its subcellular location is the nucleus. The protein localises to the perinuclear region. The catalysed reaction is L-seryl-[protein] + ATP = O-phospho-L-seryl-[protein] + ADP + H(+). It catalyses the reaction L-threonyl-[protein] + ATP = O-phospho-L-threonyl-[protein] + ADP + H(+). It carries out the reaction L-tyrosyl-[protein] + ATP = O-phospho-L-tyrosyl-[protein] + ADP + H(+). Initially produced in an inactive form and is activated by binding to viral dsRNA, which causes dimerization and autophosphorylation in the activation loop and stimulation of function. ISGylation can activate it in the absence of viral infection. Can also be activated by heparin, pro-inflammatory stimuli, growth factors, cytokines, oxidative stress and the cellular protein PRKRA. Activity is markedly stimulated by manganese ions. Activation is blocked by the cellular proteins TARBP2, DUS2L, NPM1, NCK1 and ADAR. In terms of biological role, IFN-induced dsRNA-dependent serine/threonine-protein kinase that phosphorylates the alpha subunit of eukaryotic translation initiation factor 2 (EIF2S1/eIF-2-alpha) and plays a key role in the innate immune response to viral infection. Inhibits viral replication via the integrated stress response (ISR): EIF2S1/eIF-2-alpha phosphorylation in response to viral infection converts EIF2S1/eIF-2-alpha in a global protein synthesis inhibitor, resulting to a shutdown of cellular and viral protein synthesis, while concomitantly initiating the preferential translation of ISR-specific mRNAs, such as the transcriptional activator ATF4. Exerts its antiviral activity on a wide range of DNA and RNA viruses including west nile virus (WNV), sindbis virus (SV), foot-and-mouth virus (FMDV), semliki Forest virus (SFV) and lymphocytic choriomeningitis virus (LCMV). Also involved in the regulation of signal transduction, apoptosis, cell proliferation and differentiation: phosphorylates other substrates including p53/TP53, PPP2R5A, DHX9, ILF3, and IRS1. In addition to serine/threonine-protein kinase activity, also has tyrosine-protein kinase activity and phosphorylates CDK1 at 'Tyr-4' upon DNA damage, facilitating its ubiquitination and proteasomal degradation. Either as an adapter protein and/or via its kinase activity, can regulate various signaling pathways (p38 MAP kinase, NF-kappa-B and insulin signaling pathways) and transcription factors (JUN, STAT1, STAT3, IRF1, ATF3) involved in the expression of genes encoding pro-inflammatory cytokines and IFNs. Activates the NF-kappa-B pathway via interaction with IKBKB and TRAF family of proteins and activates the p38 MAP kinase pathway via interaction with MAP2K6. Can act as both a positive and negative regulator of the insulin signaling pathway (ISP). Negatively regulates ISP by inducing the inhibitory phosphorylation of insulin receptor substrate 1 (IRS1) at 'Ser-312' and positively regulates ISP via phosphorylation of PPP2R5A which activates FOXO1, which in turn up-regulates the expression of insulin receptor substrate 2 (IRS2). Can regulate NLRP3 inflammasome assembly and the activation of NLRP3, NLRP1, AIM2 and NLRC4 inflammasomes. Plays a role in the regulation of the cytoskeleton by binding to gelsolin (GSN), sequestering the protein in an inactive conformation away from actin. This is Interferon-induced, double-stranded RNA-activated protein kinase (Eif2ak2) from Mus musculus (Mouse).